Consider the following 500-residue polypeptide: Nitrate/nitrite transporter NrtP (500 aa).

A run of 12 helical transmembrane segments spans residues 19–39 (WFAF…ATTI), 52–72 (TLGI…GMLL), 79–99 (ITYS…ALAQ), 109–129 (LLMG…AEWF), 147–167 (FGAF…SFFS), 175–195 (LAIA…YNTV), 220–240 (SFWA…LLAW), 247–267 (IHFL…GLFA), 364–384 (WTMT…HFIN), 389–409 (IPVA…GCGA), 425–445 (IAGN…TIFS), and 451–471 (TLFS…AFFL).

The protein belongs to the major facilitator superfamily. Nitrate/nitrite porter (TC 2.A.1.8) family.

The protein localises to the cell inner membrane. Its function is as follows. Transport system for both nitrate and nitrite, with much higher affinity for nitrate than for nitrite. The polypeptide is Nitrate/nitrite transporter NrtP (Nostoc punctiforme (strain ATCC 29133 / PCC 73102)).